Reading from the N-terminus, the 183-residue chain is Adenine phosphoribosyltransferase (183 aa).

Belongs to the purine/pyrimidine phosphoribosyltransferase family. Homodimer.

It localises to the cytoplasm. The catalysed reaction is AMP + diphosphate = 5-phospho-alpha-D-ribose 1-diphosphate + adenine. It participates in purine metabolism; AMP biosynthesis via salvage pathway; AMP from adenine: step 1/1. In terms of biological role, catalyzes a salvage reaction resulting in the formation of AMP, that is energically less costly than de novo synthesis. This is Adenine phosphoribosyltransferase from Erwinia tasmaniensis (strain DSM 17950 / CFBP 7177 / CIP 109463 / NCPPB 4357 / Et1/99).